A 244-amino-acid polypeptide reads, in one-letter code: MKIIAVIPARYASTRFPAKLMQDLGGKTVILRTYEAAVSTKLFDDVFVVTDSDLIFDEIVSNGGKAIMSIKEHESGSDRIAEAVANLDVDIVVNVQGDEPFTEAGPLEQVLSVFKNDPDKKIDLASLMREITNEDEINNPNNVKVVVDQSQFALYFSRSVIPYPREKDAGVRYFQHIGIYAFRKQALLDFYSLPMKSLEASEKLEQLRYLEFGKRIKMVETTHVGIGIDTAEDLERARAMLRDI.

The protein belongs to the KdsB family.

Its subcellular location is the cytoplasm. It catalyses the reaction 3-deoxy-alpha-D-manno-oct-2-ulosonate + CTP = CMP-3-deoxy-beta-D-manno-octulosonate + diphosphate. Its pathway is nucleotide-sugar biosynthesis; CMP-3-deoxy-D-manno-octulosonate biosynthesis; CMP-3-deoxy-D-manno-octulosonate from 3-deoxy-D-manno-octulosonate and CTP: step 1/1. The protein operates within bacterial outer membrane biogenesis; lipopolysaccharide biosynthesis. Functionally, activates KDO (a required 8-carbon sugar) for incorporation into bacterial lipopolysaccharide in Gram-negative bacteria. This chain is 3-deoxy-manno-octulosonate cytidylyltransferase, found in Flavobacterium johnsoniae (strain ATCC 17061 / DSM 2064 / JCM 8514 / BCRC 14874 / CCUG 350202 / NBRC 14942 / NCIMB 11054 / UW101) (Cytophaga johnsonae).